Reading from the N-terminus, the 368-residue chain is Phosphoserine aminotransferase (368 aa).

Residue R44 coordinates L-glutamate. Residues 78 to 79, W104, T157, D179, and Q202 contribute to the pyridoxal 5'-phosphate site; that span reads AT. K203 is subject to N6-(pyridoxal phosphate)lysine. 244-245 contributes to the pyridoxal 5'-phosphate binding site; it reads NT.

Belongs to the class-V pyridoxal-phosphate-dependent aminotransferase family. SerC subfamily. As to quaternary structure, homodimer. It depends on pyridoxal 5'-phosphate as a cofactor.

The protein localises to the cytoplasm. It carries out the reaction O-phospho-L-serine + 2-oxoglutarate = 3-phosphooxypyruvate + L-glutamate. The enzyme catalyses 4-(phosphooxy)-L-threonine + 2-oxoglutarate = (R)-3-hydroxy-2-oxo-4-phosphooxybutanoate + L-glutamate. Its pathway is amino-acid biosynthesis; L-serine biosynthesis; L-serine from 3-phospho-D-glycerate: step 2/3. It functions in the pathway cofactor biosynthesis; pyridoxine 5'-phosphate biosynthesis; pyridoxine 5'-phosphate from D-erythrose 4-phosphate: step 3/5. Functionally, catalyzes the reversible conversion of 3-phosphohydroxypyruvate to phosphoserine and of 3-hydroxy-2-oxo-4-phosphonooxybutanoate to phosphohydroxythreonine. The sequence is that of Phosphoserine aminotransferase from Neisseria meningitidis serogroup C / serotype 2a (strain ATCC 700532 / DSM 15464 / FAM18).